Consider the following 307-residue polypeptide: D-alanine--D-alanine ligase (307 aa).

The ATP-grasp domain occupies 101 to 301 (KTVMRAAGVS…FGELVRWMVE (201 aa)). ATP is bound at residue 127-182 (PLTPPYVVKPIAEGSSMGVIIVREERSHPPQILASDEWVYGEEVLAETYIAGRELT). Mg(2+)-binding residues include aspartate 251, glutamate 268, and asparagine 270.

This sequence belongs to the D-alanine--D-alanine ligase family. The cofactor is Mg(2+). It depends on Mn(2+) as a cofactor.

Its subcellular location is the cytoplasm. It catalyses the reaction 2 D-alanine + ATP = D-alanyl-D-alanine + ADP + phosphate + H(+). The protein operates within cell wall biogenesis; peptidoglycan biosynthesis. Functionally, cell wall formation. The protein is D-alanine--D-alanine ligase of Methylorubrum populi (strain ATCC BAA-705 / NCIMB 13946 / BJ001) (Methylobacterium populi).